Here is a 222-residue protein sequence, read N- to C-terminus: Charged multivesicular body protein 3 (222 aa).

G2 carries the N-myristoyl glycine lipid modification. Positions 2–113 (GLFGKTQEKP…LQKSTEVMKA (112 aa)) are intramolecular interaction with C-terminus. The stretch at 22–54 (KIRKEMRVVDRQIRDIQREEEKVKRSVKDAAKK) forms a coiled coil. Important for autoinhibitory function stretches follow at residues 59 to 64 (VCVVLA) and 168 to 169 (IL). A coiled-coil region spans residues 149–222 (ESMDDQEEME…MQSRLATLRS (74 aa)). Positions 151–220 (MDDQEEMEEA…EAMQSRLATL (70 aa)) are intramolecular interaction with N-terminus. The tract at residues 151–222 (MDDQEEMEEA…MQSRLATLRS (72 aa)) is interaction with VPS4A. A Glycyl lysine isopeptide (Lys-Gly) (interchain with G-Cter in ubiquitin) cross-link involves residue K179. Residues 180–222 (APSKVTDALPEPEPSGAMAASDEEEEEEEALEAMQSRLATLRS) form a disordered region. Interaction with STAMBP stretches follow at residues 196–222 (AMAA…TLRS), 203–207 (EEEEE), and 221–222 (RS). A Phosphoserine modification is found at S200. Over residues 200–210 (SDEEEEEEEAL) the composition is skewed to acidic residues. Residues 201–211 (DEEEEEEEALE) carry the MIT-interacting motif motif.

Belongs to the SNF7 family. Probable core component of the endosomal sorting required for transport complex III (ESCRT-III). ESCRT-III components are thought to multimerize to form a flat lattice on the perimeter membrane of the endosome. Several assembly forms of ESCRT-III may exist that interact and act sequentially. Forms a metastable monomer in solution; its core structure (without part of the putative autoinhibitory C-terminal acidic region) oligomerizes into a flat lattice via two different dimerization interfaces. In vitro, heteromerizes with CHMP2A (but not CHMP4) to form helical tubular structures that expose membrane-interacting sites on the outside whereas VPS4B can associate on the inside of the tubule. May interact with IGFBP7; the relevance of such interaction however remains unclear. Interacts with CHMP2A. Interacts with CHMP4A; the interaction requires the release of CHMP4A autoinhibition. Interacts with VPS4A. Interacts with STAMBP; the interaction appears to relieve the autoinhibition of CHMP3. Interacts with VTA1.

It localises to the cytoplasm. The protein localises to the cytosol. It is found in the membrane. Its subcellular location is the endosome. The protein resides in the late endosome membrane. Functionally, probable core component of the endosomal sorting required for transport complex III (ESCRT-III) which is involved in multivesicular bodies (MVBs) formation and sorting of endosomal cargo proteins into MVBs. MVBs contain intraluminal vesicles (ILVs) that are generated by invagination and scission from the limiting membrane of the endosome and mostly are delivered to lysosomes enabling degradation of membrane proteins, such as stimulated growth factor receptors, lysosomal enzymes and lipids. The MVB pathway appears to require the sequential function of ESCRT-O, -I,-II and -III complexes. ESCRT-III proteins mostly dissociate from the invaginating membrane before the ILV is released. The ESCRT machinery also functions in topologically equivalent membrane fission events, such as the terminal stages of cytokinesis and the budding of enveloped viruses (lentiviruses). ESCRT-III proteins are believed to mediate the necessary vesicle extrusion and/or membrane fission activities, possibly in conjunction with the AAA ATPase VPS4. Selectively binds to phosphatidylinositol 3,5-bisphosphate PtdIns(3,5)P2 and PtdIns(3,4)P2 in preference to other phosphoinositides tested. Involved in late stages of cytokinesis. Plays a role in endosomal sorting/trafficking of EGF receptor. This chain is Charged multivesicular body protein 3 (CHMP3), found in Macaca fascicularis (Crab-eating macaque).